Consider the following 118-residue polypeptide: Turripeptide NCR-01 (118 aa).

Positions 1-16 (MLRLILAVALVAACLA) are cleaved as a signal peptide. The interval 63–118 (QGFQGFLPQPHQKRDSYQHGGYQHQQSFDNFQGSGGMNNDNSDDSFALRNFNNDGY) is disordered. Polar residues predominate over residues 85–102 (QHQQSFDNFQGSGGMNND).

As to expression, expressed by the venom duct.

It is found in the secreted. This is Turripeptide NCR-01 from Gemmula speciosa (Splendid gem-turris).